We begin with the raw amino-acid sequence, 159 residues long: uncharacterized protein (159 aa).

This is an uncharacterized protein from Caenorhabditis elegans.